The primary structure comprises 674 residues: Zyxin (674 aa).

Residues 35–447 (PPKPKVNPFR…PHQDQTSGSQ (413 aa)) form a disordered region. Over residues 86–109 (LPPPPPNEEPMSPPGSSFPPPPPS) the composition is skewed to pro residues. Residues 110-120 (FGDDGPGSPLG) are compositionally biased toward low complexity. 5 stretches are compositionally biased toward pro residues: residues 121 to 148 (LFPPPPPPEFSEPFPPPIEESFPSPPPL), 162 to 180 (ASVPPPPPPLPSPPEPAPP), 187 to 209 (KPAPVLPKPPPPSAFPKPEPPQS), 222 to 240 (KPSPPSAVAPKPVAPPPVA), and 254 to 266 (AAPPTHTPAPPAP). Composition is skewed to basic and acidic residues over residues 328-341 (AKHEAPPPAAKHEA) and 358-387 (QRDKPRVLEKPRANVRDLVPEPPVETRGER). LIM zinc-binding domains follow at residues 481–542 (ELCG…TLEC), 543–600 (CAVC…RRYA), and 601–671 (PRCT…RARA).

Belongs to the zyxin/ajuba family. In terms of assembly, interacts (via LIM2 domain) with hesx1/anf1.

It is found in the cytoplasm. The protein localises to the cytoskeleton. Its subcellular location is the cell junction. It localises to the focal adhesion. Adhesion plaque protein. May be a component of a signal transduction pathway that mediates adhesion-stimulated changes in gene expression. Suppresses the transcription-repressing activity of hesx1/anf1. The sequence is that of Zyxin from Xenopus tropicalis (Western clawed frog).